The following is an 852-amino-acid chain: Probable nitrite reductase-hydroxylamine oxidoreductase fusion protein (852 aa).

The N-terminal stretch at 1–27 (MLNKSAALVPVVLAFLFLFLCFQCLYA) is a signal peptide. The interval 28–327 (DIRCLTGKDG…DEGRKTLSAP (300 aa)) is nitrite reductase domain. Plastocyanin-like domains are found at residues 72 to 169 (VPGP…IVEP) and 217 to 307 (GETW…VEEG). Positions 102 and 145 each coordinate Cu cation. The hydroxylamine oxidoreductase domain stretch occupies residues 328–827 (GQDRQPPTLE…ISWWWGTAQG (500 aa)). Heme-binding residues include Cys-406, Cys-409, His-410, His-426, Cys-463, Cys-466, His-467, His-471, Cys-483, Cys-486, His-487, His-505, His-537, Cys-543, Cys-546, His-547, His-550, Cys-563, Cys-566, His-567, Cys-614, Cys-617, His-618, Cys-686, Cys-689, His-690, and His-813.

It in the N-terminal section; belongs to the multicopper oxidase family. Requires Cu cation as cofactor. It depends on heme as a cofactor.

Its subcellular location is the encapsulin nanocompartment. The catalysed reaction is hydroxylamine + 4 Fe(III)-[cytochrome c] + H2O = 4 Fe(II)-[cytochrome c] + nitrite + 5 H(+). It catalyses the reaction nitric oxide + Fe(III)-[cytochrome c] + H2O = Fe(II)-[cytochrome c] + nitrite + 2 H(+). Its function is as follows. A nitrite reductase-hydroxylamine oxidoreductase protein that probably functions in the type 1 encapsulin nanocompartment. Probably involved in reductive catalysis. Targeted to the encapsulin nanocompartment by association with the diheme domain of the encapsulin shell protein (AC Q1Q6L7). Catalyzes the reduction of nitrite to nitric oxide (NO). Catalyzes the oxidation of hydroxylamine to nitrite. This Kuenenia stuttgartiensis protein is Probable nitrite reductase-hydroxylamine oxidoreductase fusion protein.